Here is a 73-residue protein sequence, read N- to C-terminus: Putative neurotoxin NaH-Cpp1a (73 aa).

The signal sequence occupies residues 1–23 (MKSFYGILCVAVLMMFHLEMSES). Intrachain disulfides connect Cys-43/Cys-58, Cys-50/Cys-63, and Cys-57/Cys-70.

As to expression, expressed outside of acontia.

Its subcellular location is the secreted. It is found in the nematocyst. Functionally, putative neurotoxin. The chain is Putative neurotoxin NaH-Cpp1a from Calliactis polypus (Hermit crab anemone).